Reading from the N-terminus, the 291-residue chain is 33 kDa chaperonin (291 aa).

Intrachain disulfides connect cysteine 237/cysteine 239 and cysteine 270/cysteine 273.

The protein belongs to the HSP33 family. Under oxidizing conditions two disulfide bonds are formed involving the reactive cysteines. Under reducing conditions zinc is bound to the reactive cysteines and the protein is inactive.

The protein resides in the cytoplasm. Redox regulated molecular chaperone. Protects both thermally unfolding and oxidatively damaged proteins from irreversible aggregation. Plays an important role in the bacterial defense system toward oxidative stress. The protein is 33 kDa chaperonin of Bacillus cereus (strain G9842).